We begin with the raw amino-acid sequence, 255 residues long: Cytochrome b561 and DOMON domain-containing protein At5g48750 (255 aa).

The first 27 residues, M1–T27, serve as a signal peptide directing secretion. One can recognise a DOMON domain in the interval L54–G169. A Cytochrome b561 domain is found at R176–L255. The helical transmembrane segment at I216–A236 threads the bilayer.

It localises to the membrane. The protein is Cytochrome b561 and DOMON domain-containing protein At5g48750 of Arabidopsis thaliana (Mouse-ear cress).